A 956-amino-acid chain; its full sequence is Valine--tRNA ligase (956 aa).

Residues 69–79 (PNITGVLHMGH) carry the 'HIGH' region motif. The 'KMSKS' region motif lies at 566 to 570 (KMSKS). Lysine 569 provides a ligand contact to ATP. A coiled-coil region spans residues 885 to 911 (LCARLQKAWQKARQKVQQVERKLADAQ).

Belongs to the class-I aminoacyl-tRNA synthetase family. ValS type 1 subfamily. Monomer.

The protein localises to the cytoplasm. The catalysed reaction is tRNA(Val) + L-valine + ATP = L-valyl-tRNA(Val) + AMP + diphosphate. In terms of biological role, catalyzes the attachment of valine to tRNA(Val). As ValRS can inadvertently accommodate and process structurally similar amino acids such as threonine, to avoid such errors, it has a 'posttransfer' editing activity that hydrolyzes mischarged Thr-tRNA(Val) in a tRNA-dependent manner. This is Valine--tRNA ligase from Treponema pallidum (strain Nichols).